The sequence spans 145 residues: Transcriptional regulator MraZ (145 aa).

SpoVT-AbrB domains are found at residues 5–47 and 76–119; these read EHQH…PLPE and AVEC…AKDQ.

This sequence belongs to the MraZ family. As to quaternary structure, forms oligomers.

It localises to the cytoplasm. The protein resides in the nucleoid. This chain is Transcriptional regulator MraZ, found in Pelotomaculum thermopropionicum (strain DSM 13744 / JCM 10971 / SI).